The sequence spans 182 residues: Homeobox protein pnx (182 aa).

Residues 1 to 34 (MHEETSNSTLQGKTSFSIADILDPAKFNGTRETR) form an important for interaction with tle3a region. The segment at 24–63 (PAKFNGTRETREISNNRESPKTTSPTQDPSAPNIANASAA) is disordered. Over residues 29–43 (GTRETREISNNRESP) the composition is skewed to basic and acidic residues. The segment covering 52–63 (PSAPNIANASAA) has biased composition (low complexity). Residues 67 to 126 (SKRIRTAFTLDQLRILERSFQSSHYLSVFERHCIASALGLSETQVKIWFQNRRTKWKKEL) constitute a DNA-binding region (homeobox).

It belongs to the NK-1 homeobox family. As to quaternary structure, interacts with tle3a.

Its subcellular location is the nucleus. In terms of biological role, transcriptional repressor. Activity as a repressor is enhanced by binding to the corepressor tle3a. This chain is Homeobox protein pnx, found in Danio rerio (Zebrafish).